The sequence spans 319 residues: Phosphoenolpyruvate transferase (319 aa).

Asp-50 contacts 7,8-didemethyl-8-hydroxy-5-deazariboflavin.

Belongs to the CofD family. Homodimer. Mg(2+) serves as cofactor.

It carries out the reaction enolpyruvoyl-2-diphospho-5'-guanosine + 7,8-didemethyl-8-hydroxy-5-deazariboflavin = dehydro coenzyme F420-0 + GMP + H(+). It functions in the pathway cofactor biosynthesis; coenzyme F420 biosynthesis. Its function is as follows. Catalyzes the transfer of the phosphoenolpyruvate moiety from enoylpyruvoyl-2-diphospho-5'-guanosine (EPPG) to 7,8-didemethyl-8-hydroxy-5-deazariboflavin (FO) with the formation of dehydro coenzyme F420-0 and GMP. This is Phosphoenolpyruvate transferase from Streptomyces avermitilis (strain ATCC 31267 / DSM 46492 / JCM 5070 / NBRC 14893 / NCIMB 12804 / NRRL 8165 / MA-4680).